The following is a 331-amino-acid chain: Cathepsin 7 (331 aa).

The N-terminal stretch at 1–17 (MTPTVFLSILCLGVALA) is a signal peptide. A propeptide spans 18-111 (APAPDYNLDA…GKHIQKRNPK (94 aa)) (activation peptide). The Nuclear localization signal signature appears at 33 to 50 (KRSNDRTYSPEEEKQRRA). The N-linked (GlcNAc...) asparagine glycan is linked to asparagine 72. Cystine bridges form between cysteine 133-cysteine 176, cysteine 167-cysteine 209, and cysteine 267-cysteine 320. Cysteine 136 is an active-site residue. Residues histidine 274 and asparagine 298 contribute to the active site.

This sequence belongs to the peptidase C1 family. In terms of tissue distribution, expressed in placenta. Expressed in parietal and spiral artery-associated trophoblast giant cells, most abundantly during the phase of trophoblast invasion. From 14.5 dpc onwards, expressed at lower levels in labyrinth trophoblast cells. Expressed in trophoblast stem cells. Expressed in heart, liver and testis.

It is found in the endosome. The protein resides in the lysosome. Its subcellular location is the cytoplasm. The protein localises to the perinuclear region. It localises to the golgi apparatus. It is found in the nucleus. The protein resides in the secreted. Its subcellular location is the extracellular space. Involved in trophoblast cell proliferation and differentiation probably by affecting mitotic cell cycle progression. Proteolytic activity and nuclear localization are essential for its role in cell cycle progression. This is Cathepsin 7 from Mus musculus (Mouse).